A 93-amino-acid chain; its full sequence is UPF0358 protein BBR47_22520 (93 aa).

Belongs to the UPF0358 family.

The polypeptide is UPF0358 protein BBR47_22520 (Brevibacillus brevis (strain 47 / JCM 6285 / NBRC 100599)).